We begin with the raw amino-acid sequence, 258 residues long: U6 snRNA phosphodiesterase 1 (258 aa).

The segment at 1 to 20 (MALVDYGGSSSSASEDEDCT) is disordered. His117 (proton acceptor) is an active-site residue. AMP-binding positions include 117–119 (HLS), Tyr200, and 202–208 (PASFHVS). UMP is bound by residues Tyr200 and 204–208 (SFHVS). Residue His206 is the Proton donor of the active site.

It belongs to the 2H phosphoesterase superfamily. USB1 family.

Its subcellular location is the nucleus. The catalysed reaction is a 3'-end uridylyl-uridine-RNA = a 3'-end 2',3'-cyclophospho-uridine-RNA + uridine. In terms of biological role, 3'-5' RNA exonuclease that trims the 3' end of oligo(U) tracts of the pre-U6 small nuclear RNA (snRNA) molecule, leading to the formation of a mature U6 snRNA 3' end-terminated with a 2',3'-cyclic phosphate. Participates in the U6 snRNA 3' end processing that prevents U6 snRNA degradation. The polypeptide is U6 snRNA phosphodiesterase 1 (Drosophila melanogaster (Fruit fly)).